The following is a 105-amino-acid chain: MVTQKIYIELKAFDHGLLDRSARNIVLVAKRSGAKVNGPIFFPRRTAKFIVNRSTHVDKKSREQFEIRTHKRLISLPKANSAILQALMSLQLPAGVDVKVKVVGG.

It belongs to the universal ribosomal protein uS10 family. Part of the 30S ribosomal subunit.

Involved in the binding of tRNA to the ribosomes. In Anaplasma phagocytophilum (strain HZ), this protein is Small ribosomal subunit protein uS10.